Here is a 516-residue protein sequence, read N- to C-terminus: Probable serine/threonine-protein kinase DDB_G0293276 (516 aa).

The interval 69-115 (SIEIDDENPYNTNNNNNSNNNNNNNNNNCNNSNNSNNNKNINSLDNI) is disordered. Positions 79-115 (NTNNNNNSNNNNNNNNNNCNNSNNSNNNKNINSLDNI) are enriched in low complexity. The region spanning 232 to 479 (YKHVECIGKG…SKDIKNHPYF (248 aa)) is the Protein kinase domain. ATP-binding positions include 238–246 (IGKGGYGVV) and lysine 261. Aspartate 350 functions as the Proton acceptor in the catalytic mechanism.

The protein belongs to the protein kinase superfamily. AGC Ser/Thr protein kinase family.

The enzyme catalyses L-seryl-[protein] + ATP = O-phospho-L-seryl-[protein] + ADP + H(+). It catalyses the reaction L-threonyl-[protein] + ATP = O-phospho-L-threonyl-[protein] + ADP + H(+). The polypeptide is Probable serine/threonine-protein kinase DDB_G0293276 (Dictyostelium discoideum (Social amoeba)).